The primary structure comprises 370 residues: Phospho-N-acetylmuramoyl-pentapeptide-transferase (370 aa).

Helical transmembrane passes span 31–51, 73–93, 98–118, 135–155, 177–197, 209–229, 251–271, 273–293, 298–318, and 347–367; these read LTSM…LYGL, TMGG…WGNL, IIVL…DDYM, LLSI…TGVI, GPVL…IIGS, GLAT…AYVS, VFLS…AHPA, VFMG…IVIL, ILLL…ILQV, and KIVI…LSTL.

The protein belongs to the glycosyltransferase 4 family. MraY subfamily. Mg(2+) serves as cofactor.

The protein resides in the cell inner membrane. It catalyses the reaction UDP-N-acetyl-alpha-D-muramoyl-L-alanyl-gamma-D-glutamyl-meso-2,6-diaminopimeloyl-D-alanyl-D-alanine + di-trans,octa-cis-undecaprenyl phosphate = di-trans,octa-cis-undecaprenyl diphospho-N-acetyl-alpha-D-muramoyl-L-alanyl-D-glutamyl-meso-2,6-diaminopimeloyl-D-alanyl-D-alanine + UMP. The protein operates within cell wall biogenesis; peptidoglycan biosynthesis. In terms of biological role, catalyzes the initial step of the lipid cycle reactions in the biosynthesis of the cell wall peptidoglycan: transfers peptidoglycan precursor phospho-MurNAc-pentapeptide from UDP-MurNAc-pentapeptide onto the lipid carrier undecaprenyl phosphate, yielding undecaprenyl-pyrophosphoryl-MurNAc-pentapeptide, known as lipid I. This chain is Phospho-N-acetylmuramoyl-pentapeptide-transferase, found in Leptospira borgpetersenii serovar Hardjo-bovis (strain JB197).